We begin with the raw amino-acid sequence, 76 residues long: MVGINKPEPFGTGINVPYKLQKVQYFRENFQAFFKFTPKIVLNLVVLVGVVPLTWMFLGQVQQDQKVIVNRKAREQ.

The chain crosses the membrane as a helical span at residues 40 to 60; sequence IVLNLVVLVGVVPLTWMFLGQ.

It is found in the membrane. This is an uncharacterized protein from Dictyostelium discoideum (Social amoeba).